Reading from the N-terminus, the 110-residue chain is UPF0060 membrane protein AHA_2410 (110 aa).

The next 4 helical transmembrane spans lie at 8-28 (GLFLVTALAEILGCYLPYLWL), 33-53 (SVWLLLPAGLSLMLFAWLLSL), 63-83 (AAYGGVYIFVAILWLWLVDGI), and 87-107 (LWDLVGSLVALCGMAIIMFAP).

This sequence belongs to the UPF0060 family.

It is found in the cell inner membrane. The protein is UPF0060 membrane protein AHA_2410 of Aeromonas hydrophila subsp. hydrophila (strain ATCC 7966 / DSM 30187 / BCRC 13018 / CCUG 14551 / JCM 1027 / KCTC 2358 / NCIMB 9240 / NCTC 8049).